We begin with the raw amino-acid sequence, 220 residues long: Deoxyribose-phosphate aldolase 1 (220 aa).

Asp-89 functions as the Proton donor/acceptor in the catalytic mechanism. The Schiff-base intermediate with acetaldehyde role is filled by Lys-151. The active-site Proton donor/acceptor is the Lys-180.

This sequence belongs to the DeoC/FbaB aldolase family. DeoC type 1 subfamily.

It is found in the cytoplasm. The catalysed reaction is 2-deoxy-D-ribose 5-phosphate = D-glyceraldehyde 3-phosphate + acetaldehyde. The protein operates within carbohydrate degradation; 2-deoxy-D-ribose 1-phosphate degradation; D-glyceraldehyde 3-phosphate and acetaldehyde from 2-deoxy-alpha-D-ribose 1-phosphate: step 2/2. Catalyzes a reversible aldol reaction between acetaldehyde and D-glyceraldehyde 3-phosphate to generate 2-deoxy-D-ribose 5-phosphate. The protein is Deoxyribose-phosphate aldolase 1 of Staphylococcus aureus (strain MRSA252).